Consider the following 347-residue polypeptide: D-alanine--D-alanine ligase (347 aa).

One can recognise an ATP-grasp domain in the interval 134 to 332 (KLYAKDLGIK…LAQSLPKTPK (199 aa)). 161-216 (LINFNFPFIIKPNSAGSSLGVSVVKEEKELNYALDSAFEYSKEVLIEPFIQGVKEY) provides a ligand contact to ATP. Asp288, Glu300, and Asn302 together coordinate Mg(2+).

The protein belongs to the D-alanine--D-alanine ligase family. Mg(2+) is required as a cofactor. The cofactor is Mn(2+).

Its subcellular location is the cytoplasm. It carries out the reaction 2 D-alanine + ATP = D-alanyl-D-alanine + ADP + phosphate + H(+). It participates in cell wall biogenesis; peptidoglycan biosynthesis. Its function is as follows. Cell wall formation. The polypeptide is D-alanine--D-alanine ligase (Helicobacter pylori (strain HPAG1)).